We begin with the raw amino-acid sequence, 224 residues long: Uracil-DNA glycosylase (224 aa).

Asp-64 functions as the Proton acceptor in the catalytic mechanism.

It belongs to the uracil-DNA glycosylase (UDG) superfamily. UNG family.

The protein resides in the cytoplasm. The catalysed reaction is Hydrolyzes single-stranded DNA or mismatched double-stranded DNA and polynucleotides, releasing free uracil.. Its function is as follows. Excises uracil residues from the DNA which can arise as a result of misincorporation of dUMP residues by DNA polymerase or due to deamination of cytosine. In Clostridioides difficile (strain 630) (Peptoclostridium difficile), this protein is Uracil-DNA glycosylase.